Reading from the N-terminus, the 733-residue chain is Protein ROG3 (733 aa).

Positions 460–463 match the PY-motif motif; the sequence is PPNY. Residues 518 to 566 form a disordered region; that stretch reads RDNLGLPPSASSAAASRSLSPLLNVPAPEDGTERILPQSALGPNSGSVP. Low complexity predominate over residues 523 to 540; the sequence is LPPSASSAAASRSLSPLL. A PY-motif motif is present at residues 625–628; it reads PPSY. 2 disordered regions span residues 636–658 and 693–733; these read QPRK…SIPT and ELTS…GNKR. The span at 646–658 shows a compositional bias: low complexity; the sequence is RNSSTTLSSSIPT.

Belongs to the arrestin family. Interacts with RSP5 via its 2 PY-motifs.

Its function is as follows. Involved in resistance to GST substrate o-dinitrobenzene (o-DNB). The sequence is that of Protein ROG3 (ROG3) from Saccharomyces cerevisiae (strain ATCC 204508 / S288c) (Baker's yeast).